A 397-amino-acid chain; its full sequence is Arginine biosynthesis bifunctional protein ArgJ (397 aa).

Threonine 147, lysine 173, threonine 184, glutamate 270, asparagine 392, and threonine 397 together coordinate substrate. Threonine 184 serves as the catalytic Nucleophile.

This sequence belongs to the ArgJ family. In terms of assembly, heterotetramer of two alpha and two beta chains.

Its subcellular location is the cytoplasm. The catalysed reaction is N(2)-acetyl-L-ornithine + L-glutamate = N-acetyl-L-glutamate + L-ornithine. The enzyme catalyses L-glutamate + acetyl-CoA = N-acetyl-L-glutamate + CoA + H(+). It participates in amino-acid biosynthesis; L-arginine biosynthesis; L-ornithine and N-acetyl-L-glutamate from L-glutamate and N(2)-acetyl-L-ornithine (cyclic): step 1/1. The protein operates within amino-acid biosynthesis; L-arginine biosynthesis; N(2)-acetyl-L-ornithine from L-glutamate: step 1/4. Catalyzes two activities which are involved in the cyclic version of arginine biosynthesis: the synthesis of N-acetylglutamate from glutamate and acetyl-CoA as the acetyl donor, and of ornithine by transacetylation between N(2)-acetylornithine and glutamate. The sequence is that of Arginine biosynthesis bifunctional protein ArgJ from Streptococcus mutans serotype c (strain ATCC 700610 / UA159).